Here is a 72-residue protein sequence, read N- to C-terminus: Cell division protein ZapB (72 aa).

A coiled-coil region spans residues 1 to 71; sequence MSLEILDQLE…IRSLLGKFDN (71 aa).

The protein belongs to the ZapB family. As to quaternary structure, homodimer. The ends of the coiled-coil dimer bind to each other, forming polymers. Interacts with FtsZ.

The protein resides in the cytoplasm. Its function is as follows. Non-essential, abundant cell division factor that is required for proper Z-ring formation. It is recruited early to the divisome by direct interaction with FtsZ, stimulating Z-ring assembly and thereby promoting cell division earlier in the cell cycle. Its recruitment to the Z-ring requires functional FtsA or ZipA. The chain is Cell division protein ZapB from Haemophilus influenzae (strain 86-028NP).